A 211-amino-acid polypeptide reads, in one-letter code: MTLVAFDFDGTLAESEMLDRIAARAGVGDEVAAITERAMRGELSYADSLRERAQLVAGLPESAAAAVYDGVRLRDGAGDLVAKLRDGGVRVVVLTGGFKPGVAAAFDAAGVAADGVVGNRLVAADGELTGAVEGPLVEGTKDDALRDACEAAGTTPAAAVAVGDGANDVPMLDAAGTAIGVDPKPGVDAHCDHTVSSMDALGRVLDDHGIA.

The active-site Nucleophile is the Asp7. Positions 7 and 9 each coordinate Mg(2+). Catalysis depends on Asp9, which acts as the Proton donor. Substrate-binding positions include Glu16, Arg52, 95–96 (TG), and Lys141. Asp164 contributes to the Mg(2+) binding site. Asn167 provides a ligand contact to substrate.

It belongs to the HAD-like hydrolase superfamily. SerB family. Mg(2+) serves as cofactor.

It catalyses the reaction O-phospho-L-serine + H2O = L-serine + phosphate. It carries out the reaction O-phospho-D-serine + H2O = D-serine + phosphate. Its pathway is amino-acid biosynthesis; L-serine biosynthesis; L-serine from 3-phospho-D-glycerate: step 3/3. Its function is as follows. Catalyzes the dephosphorylation of phosphoserine (P-Ser). The sequence is that of Phosphoserine phosphatase (serB) from Halobacterium salinarum (strain ATCC 29341 / DSM 671 / R1).